Reading from the N-terminus, the 453-residue chain is Chromosomal replication initiator protein DnaA (453 aa).

Positions 1 to 73 (MELSPQDLWT…ADVVEEILGY (73 aa)) are domain I, interacts with DnaA modulators. Residues 73 to 110 (YSIDIQLTSTQGENIAIVGETQVSAYYPTLSGEHPKPI) are domain II. The domain III, AAA+ region stretch occupies residues 111–327 (KLNPKYTFSR…GALIRAITYI (217 aa)). ATP-binding residues include G155, G157, K158, and T159. The segment at 328 to 453 (SISGLSMTVE…HLASRTQKTT (126 aa)) is domain IV, binds dsDNA.

It belongs to the DnaA family. As to quaternary structure, oligomerizes as a right-handed, spiral filament on DNA at oriC.

Its subcellular location is the cytoplasm. In terms of biological role, plays an essential role in the initiation and regulation of chromosomal replication. ATP-DnaA binds to the origin of replication (oriC) to initiate formation of the DNA replication initiation complex once per cell cycle. Binds the DnaA box (a 9 base pair repeat at the origin) and separates the double-stranded (ds)DNA. Forms a right-handed helical filament on oriC DNA; dsDNA binds to the exterior of the filament while single-stranded (ss)DNA is stabiized in the filament's interior. The ATP-DnaA-oriC complex binds and stabilizes one strand of the AT-rich DNA unwinding element (DUE), permitting loading of DNA polymerase. After initiation quickly degrades to an ADP-DnaA complex that is not apt for DNA replication. Binds acidic phospholipids. The chain is Chromosomal replication initiator protein DnaA from Gloeothece citriformis (strain PCC 7424) (Cyanothece sp. (strain PCC 7424)).